Here is a 303-residue protein sequence, read N- to C-terminus: MAASILQAENIELRKRLNAVCEYVDMEAKCETAAGKIFYKHCYQTAKNGGTGTGLICMNPDMLHAMELFDEELSLKDNWTNFKNILIKINIGQVITIHGQAIPVNPNHYRNGEGYYLTLVAPKKTEAIDDAVPLLDTEQLYRFIMCYHEIKMDLIDWIERSASLSGLQVKLDSANHALNMAEYVMDTIADPTNEDIVLQCISEVNEMDNAKFGHFLGKLNDLLDSPELKPNSCSDIARKQLRYFYRVDKDSAVNYIADNYFNLDISFKEFLDNFMLKTFYPELNCKNIMFYPIGAKKIVFCMK.

This is an uncharacterized protein from Magallana gigas (Pacific oyster).